Reading from the N-terminus, the 218-residue chain is MGQKINPLGFRLGTTQSHRSLWFAQPKDYSRNLQEDEKIRDCIKNYVQKHMRISSGFQGIARLGIQKRIDLIQVTIYIGSSNLLIEGPTRGIEELRTDVQKKLNSMNRRLNITITRIARPYEQPNILAEYIALQLKNRVSFRKAMKKAIELAEQANTKGIRVQIAGRLNGKEIARVEWIREGRVPLHTIRAKIDYCSYMVQTIYGVLGIKIWIFVDEE.

Residues 47-118 (VQKHMRISSG…RLNITITRIA (72 aa)) enclose the KH type-2 domain.

This sequence belongs to the universal ribosomal protein uS3 family. As to quaternary structure, part of the 30S ribosomal subunit.

It localises to the plastid. The protein resides in the chloroplast. The chain is Small ribosomal subunit protein uS3c (rps3) from Amborella trichopoda.